Reading from the N-terminus, the 258-residue chain is NAD kinase (258 aa).

Aspartate 51 (proton acceptor) is an active-site residue. NAD(+)-binding positions include 51-52 (DG), lysine 56, 119-120 (ND), lysine 130, aspartate 149, 160-165 (TAYSLS), and alanine 184.

The protein belongs to the NAD kinase family. It depends on a divalent metal cation as a cofactor.

Its subcellular location is the cytoplasm. The enzyme catalyses NAD(+) + ATP = ADP + NADP(+) + H(+). Its function is as follows. Involved in the regulation of the intracellular balance of NAD and NADP, and is a key enzyme in the biosynthesis of NADP. Catalyzes specifically the phosphorylation on 2'-hydroxyl of the adenosine moiety of NAD to yield NADP. The polypeptide is NAD kinase (Thermotoga petrophila (strain ATCC BAA-488 / DSM 13995 / JCM 10881 / RKU-1)).